The sequence spans 139 residues: Acidic phospholipase A2 Tgc-E6 (139 aa).

The signal sequence occupies residues 1–16; the sequence is MRTLWIMAVLLLGVEG. 7 disulfide bridges follow: Cys-42/Cys-132, Cys-44/Cys-60, Cys-59/Cys-111, Cys-65/Cys-139, Cys-66/Cys-104, Cys-73/Cys-97, and Cys-91/Cys-102. Ca(2+) is bound by residues Tyr-43, Gly-45, and Gly-47. Residue His-63 is part of the active site. Asp-64 lines the Ca(2+) pocket. Residue Asp-105 is part of the active site.

It belongs to the phospholipase A2 family. Group II subfamily. D49 sub-subfamily. As to quaternary structure, monomer. Ca(2+) is required as a cofactor. Expressed by the venom gland.

The protein localises to the secreted. It carries out the reaction a 1,2-diacyl-sn-glycero-3-phosphocholine + H2O = a 1-acyl-sn-glycero-3-phosphocholine + a fatty acid + H(+). Its function is as follows. Snake venom phospholipase A2 (PLA2) that inhibits the ADP-(IC(50)=272 nM) and collagen-induced (IC(50)=518 nM) human platelet aggregation in platelet rich plasma. Exhibits very high hydrolytic activities toward the synthetic lecithin, and prefers the anionic micelles (dPPC with deoxycholate) to the zwitterionic micelles (dPPC with Triton X-100). PLA2 catalyzes the calcium-dependent hydrolysis of the 2-acyl groups in 3-sn-phosphoglycerides. This chain is Acidic phospholipase A2 Tgc-E6, found in Trimeresurus gracilis (Kikuchi habu).